The sequence spans 447 residues: Oxysterols receptor LXR-alpha (447 aa).

Residues 1–88 form a disordered region; that stretch reads MSLWLEAPVP…LRPQKRKKGP (88 aa). The interval 1 to 96 is transactivation AF-1; required for ligand-independent transactivation function; that stretch reads MSLWLEAPVP…GPAPKMLGNE (96 aa). The segment at residues 95-170 is a DNA-binding region (nuclear receptor); it reads NELCSVCGDK…AGMREECVLS (76 aa). 2 consecutive NR C4-type zinc fingers follow at residues 98–118 and 134–158; these read CSVC…CEGC and CHSG…LRKC. The interval 178–203 is disordered; it reads KMKRQEEEQAQATSAPPRASSPPQVL. Residues 187 to 203 are compositionally biased toward low complexity; the sequence is AQATSAPPRASSPPQVL. Residues 205 to 447 are transactivation AF-2; required for ligand-dependent transactivation function; mediates interaction with CCAR2; it reads QLSPEQLGMI…LLSEIWDVHE (243 aa). The region spanning 209–447 is the NR LBD domain; it reads EQLGMIEKLV…LLSEIWDVHE (239 aa).

It belongs to the nuclear hormone receptor family. NR1 subfamily. In terms of assembly, heterodimer of NR1H3 and RXR (retinoic acid receptor). Interacts with CCAR2 (via N-terminus) in a ligand-independent manner. Interacts with SIRT1 and this interaction is inhibited by CCAR2. Post-translationally, ubiquitinated by UBR5, leading to its degradation: UBR5 specifically recognizes and binds ligand-bound NR1H3 when it is not associated with coactivators (NCOAs). In presence of NCOAs, the UBR5-degron is not accessible, preventing its ubiquitination and degradation.

The protein localises to the nucleus. It localises to the cytoplasm. Nuclear receptor that exhibits a ligand-dependent transcriptional activation activity. Interaction with retinoic acid receptor (RXR) shifts RXR from its role as a silent DNA-binding partner to an active ligand-binding subunit in mediating retinoid responses through target genes defined by LXRES. LXRES are DR4-type response elements characterized by direct repeats of two similar hexanuclotide half-sites spaced by four nucleotides. Plays an important role in the regulation of cholesterol homeostasis, regulating cholesterol uptake through MYLIP-dependent ubiquitination of LDLR, VLDLR and LRP8. Interplays functionally with RORA for the regulation of genes involved in liver metabolism. Induces LPCAT3-dependent phospholipid remodeling in endoplasmic reticulum (ER) membranes of hepatocytes, driving SREBF1 processing and lipogenesis. Via LPCAT3, triggers the incorporation of arachidonate into phosphatidylcholines of ER membranes, increasing membrane dynamics and enabling triacylglycerols transfer to nascent very low-density lipoprotein (VLDL) particles. Via LPCAT3 also counteracts lipid-induced ER stress response and inflammation, likely by modulating SRC kinase membrane compartmentalization and limiting the synthesis of lipid inflammatory mediators. This is Oxysterols receptor LXR-alpha (NR1H3) from Bos taurus (Bovine).